The sequence spans 221 residues: MAMQLHAASPDSEHYVAKSPPPPPPLSPHPEPAPAFVKPKSPHVSQGGNAPVATATTPLTPGRVDRARHDHHGGGGGGDEATQLLNGIVLVLRAGAALLSFVAMALVASCRHGDWMDFLRYQEYRYLLGVSVVAFVYSAAQALKNFRRRRRGAADASFLDFAGDQAVAYLLVTASAAALPITIRMRSAVVNVFTDAIAASIALGFLAFAALALSAMLSRHA.

The segment at 1 to 78 (MAMQLHAASP…HDHHGGGGGG (78 aa)) is disordered. Residues 1-87 (MAMQLHAASP…GDEATQLLNG (87 aa)) lie on the Cytoplasmic side of the membrane. The segment covering 19 to 33 (SPPPPPPLSPHPEPA) has biased composition (pro residues). Positions 50 to 62 (APVATATTPLTPG) are enriched in low complexity. Residues 88 to 108 (IVLVLRAGAALLSFVAMALVA) traverse the membrane as a helical segment. At 109 to 125 (SCRHGDWMDFLRYQEYR) the chain is on the extracellular side. A helical membrane pass occupies residues 126–146 (YLLGVSVVAFVYSAAQALKNF). Residues 147-160 (RRRRRGAADASFLD) lie on the Cytoplasmic side of the membrane. Residues 161–181 (FAGDQAVAYLLVTASAAALPI) traverse the membrane as a helical segment. Over 182-196 (TIRMRSAVVNVFTDA) the chain is Extracellular. Residues 197–217 (IAASIALGFLAFAALALSAML) traverse the membrane as a helical segment. At 218-221 (SRHA) the chain is on the cytoplasmic side.

This sequence belongs to the Casparian strip membrane proteins (CASP) family. Homodimer and heterodimers.

It localises to the cell membrane. This Hordeum vulgare subsp. vulgare (Domesticated barley) protein is CASP-like protein 4B1.